The primary structure comprises 258 residues: Imidazole glycerol phosphate synthase subunit HisF (258 aa).

Active-site residues include Asp-11 and Asp-130.

It belongs to the HisA/HisF family. Heterodimer of HisH and HisF.

Its subcellular location is the cytoplasm. It carries out the reaction 5-[(5-phospho-1-deoxy-D-ribulos-1-ylimino)methylamino]-1-(5-phospho-beta-D-ribosyl)imidazole-4-carboxamide + L-glutamine = D-erythro-1-(imidazol-4-yl)glycerol 3-phosphate + 5-amino-1-(5-phospho-beta-D-ribosyl)imidazole-4-carboxamide + L-glutamate + H(+). Its pathway is amino-acid biosynthesis; L-histidine biosynthesis; L-histidine from 5-phospho-alpha-D-ribose 1-diphosphate: step 5/9. In terms of biological role, IGPS catalyzes the conversion of PRFAR and glutamine to IGP, AICAR and glutamate. The HisF subunit catalyzes the cyclization activity that produces IGP and AICAR from PRFAR using the ammonia provided by the HisH subunit. The sequence is that of Imidazole glycerol phosphate synthase subunit HisF from Buchnera aphidicola subsp. Baizongia pistaciae (strain Bp).